The sequence spans 532 residues: Protein FAM227B (532 aa).

Residues 432–482 (DNKKDFKRVKQRIKDDIKFLREQQELIDKELDRIQAKASKNLQEVKNEFEN) adopt a coiled-coil conformation. A disordered region spans residues 494-532 (KEEYGGSTSASESPQSMQSPQSSSSFPTISEDFNNVEEG). Positions 500–523 (STSASESPQSMQSPQSSSSFPTIS) are enriched in low complexity.

The protein belongs to the FAM227 family.

In Mus musculus (Mouse), this protein is Protein FAM227B (Fam227b).